We begin with the raw amino-acid sequence, 720 residues long: Chloroplastic group IIA intron splicing facilitator CRS1, chloroplastic (720 aa).

The N-terminal 77 residues, 1-77, are a transit peptide targeting the chloroplast; the sequence is MRNGINILSY…DQFRENRGVS (77 aa). Positions 131-159 form a coiled coil; it reads KAMKKIVRNVEKLDEDSDSEETQMDDLSE. 2 CRM domains span residues 205-301 and 359-456; these read LILD…EGQD and AKLT…EVAD. 2 coiled-coil regions span residues 447–477 and 517–553; these read KDFLSDEVADLVEDRERLLSRYQHFEETKRE and RNLETEAEKARLEKELKSQEHKLSILKSKIEKSNMEL. Positions 570 to 670 constitute a CRM 3 domain; sequence EILTNEEREC…KNYKRPSSKL (101 aa).

Homodimer. Interacts with RNA. Part of large ribonucleo-protein complexes that include group IIA introns and CRS1.

It localises to the plastid. The protein resides in the chloroplast stroma. Its function is as follows. Required for the splicing of group IIA introns in chloroplasts, by regulating the intron folding. Forms splicing particles with RNA. May also be involved in chloroplast protein translation. This chain is Chloroplastic group IIA intron splicing facilitator CRS1, chloroplastic, found in Arabidopsis thaliana (Mouse-ear cress).